The primary structure comprises 124 residues: Small ribosomal subunit protein uS12 (124 aa).

3-methylthioaspartic acid is present on Asp-89.

Belongs to the universal ribosomal protein uS12 family. As to quaternary structure, part of the 30S ribosomal subunit. Contacts proteins S8 and S17. May interact with IF1 in the 30S initiation complex.

In terms of biological role, with S4 and S5 plays an important role in translational accuracy. Interacts with and stabilizes bases of the 16S rRNA that are involved in tRNA selection in the A site and with the mRNA backbone. Located at the interface of the 30S and 50S subunits, it traverses the body of the 30S subunit contacting proteins on the other side and probably holding the rRNA structure together. The combined cluster of proteins S8, S12 and S17 appears to hold together the shoulder and platform of the 30S subunit. This Klebsiella pneumoniae (strain 342) protein is Small ribosomal subunit protein uS12.